A 405-amino-acid chain; its full sequence is S-adenosylmethionine:tRNA ribosyltransferase-isomerase (405 aa).

Belongs to the QueA family. In terms of assembly, monomer.

The protein resides in the cytoplasm. It carries out the reaction 7-aminomethyl-7-carbaguanosine(34) in tRNA + S-adenosyl-L-methionine = epoxyqueuosine(34) in tRNA + adenine + L-methionine + 2 H(+). It participates in tRNA modification; tRNA-queuosine biosynthesis. Functionally, transfers and isomerizes the ribose moiety from AdoMet to the 7-aminomethyl group of 7-deazaguanine (preQ1-tRNA) to give epoxyqueuosine (oQ-tRNA). In Psychrobacter cryohalolentis (strain ATCC BAA-1226 / DSM 17306 / VKM B-2378 / K5), this protein is S-adenosylmethionine:tRNA ribosyltransferase-isomerase.